A 154-amino-acid chain; its full sequence is uncharacterized protein (154 aa).

Residues 104–124 (NNNNNDNDNNNKEKEDNDEKE) are disordered. Basic and acidic residues predominate over residues 112-124 (NNNKEKEDNDEKE).

This is an uncharacterized protein from Dictyostelium discoideum (Social amoeba).